A 153-amino-acid chain; its full sequence is Large ribosomal subunit protein uL30 (153 aa).

Belongs to the universal ribosomal protein uL30 family. As to quaternary structure, part of the 50S ribosomal subunit.

The sequence is that of Large ribosomal subunit protein uL30 from Methanosarcina acetivorans (strain ATCC 35395 / DSM 2834 / JCM 12185 / C2A).